The primary structure comprises 70 residues: MKLLLVLITLIIAALANNALRDPLAPPVRRFGHLAGAPKLRGHDASRNVAAQPVYNAAEERLQQCRAHLD.

The first 16 residues, 1–16 (MKLLLVLITLIIAALA), serve as a signal peptide directing secretion.

This is an uncharacterized protein from Orgyia pseudotsugata (Douglas-fir tussock moth).